The primary structure comprises 350 residues: Homeobox-leucine zipper protein HOX5 (350 aa).

The homeobox DNA-binding region spans 83-142 (APEKKRRLTAEQVQMLERSFEEENKLEPERKTELARRLGMAPRQVAVWFQNRRARWKTKQ). A leucine-zipper region spans residues 141 to 185 (KQLEHDFDRLKAAYDALAADHHALLSDNDRLRAQVISLTEKLQDK). The segment at 180–254 (EKLQDKETSP…TNDDGDGGGA (75 aa)) is disordered. Residues 188-198 (SPSSATITTAA) are compositionally biased toward low complexity.

This sequence belongs to the HD-ZIP homeobox family. Class I subfamily. As to quaternary structure, homodimer. May form a heterodimer with HOX4. In terms of tissue distribution, expressed in seedlings, roots, leaves, nodes, internodes, flowers and embryo.

The protein resides in the nucleus. Functionally, probable transcription activator that binds to the DNA sequence 5'-CAAT[AT]ATTG-3'. The polypeptide is Homeobox-leucine zipper protein HOX5 (HOX5) (Oryza sativa subsp. indica (Rice)).